The chain runs to 275 residues: Large ribosomal subunit protein uL2 (275 aa).

Residues 220 to 275 (QTRGAAMNPVDHPHGGGEGKTGSSGHPVSPWGMPAKGFKTRKKKASDKLIISRRKK) are disordered. A compositionally biased stretch (basic residues) spans 257–275 (FKTRKKKASDKLIISRRKK).

This sequence belongs to the universal ribosomal protein uL2 family. As to quaternary structure, part of the 50S ribosomal subunit. Forms a bridge to the 30S subunit in the 70S ribosome.

One of the primary rRNA binding proteins. Required for association of the 30S and 50S subunits to form the 70S ribosome, for tRNA binding and peptide bond formation. It has been suggested to have peptidyltransferase activity; this is somewhat controversial. Makes several contacts with the 16S rRNA in the 70S ribosome. The chain is Large ribosomal subunit protein uL2 from Wolinella succinogenes (strain ATCC 29543 / DSM 1740 / CCUG 13145 / JCM 31913 / LMG 7466 / NCTC 11488 / FDC 602W) (Vibrio succinogenes).